Consider the following 215-residue polypeptide: Methylthioribulose-1-phosphate dehydratase (215 aa).

2 residues coordinate Zn(2+): His103 and His105.

This sequence belongs to the aldolase class II family. MtnB subfamily. Requires Zn(2+) as cofactor.

The enzyme catalyses 5-(methylsulfanyl)-D-ribulose 1-phosphate = 5-methylsulfanyl-2,3-dioxopentyl phosphate + H2O. Its pathway is amino-acid biosynthesis; L-methionine biosynthesis via salvage pathway; L-methionine from S-methyl-5-thio-alpha-D-ribose 1-phosphate: step 2/6. Catalyzes the dehydration of methylthioribulose-1-phosphate (MTRu-1-P) into 2,3-diketo-5-methylthiopentyl-1-phosphate (DK-MTP-1-P). This is Methylthioribulose-1-phosphate dehydratase from Sulfurihydrogenibium sp. (strain YO3AOP1).